We begin with the raw amino-acid sequence, 241 residues long: ATP synthase subunit a (241 aa).

Transmembrane regions (helical) follow at residues 30-50, 89-109, 128-148, 193-213, and 214-234; these read GQVF…VLVG, LPFI…GALI, INTT…AGLS, LAVG…VMLL, and GLFT…FYIG.

The protein belongs to the ATPase A chain family. In terms of assembly, F-type ATPases have 2 components, CF(1) - the catalytic core - and CF(0) - the membrane proton channel. CF(1) has five subunits: alpha(3), beta(3), gamma(1), delta(1), epsilon(1). CF(0) has four main subunits: a, b, b' and c.

Its subcellular location is the cellular thylakoid membrane. Functionally, key component of the proton channel; it plays a direct role in the translocation of protons across the membrane. The polypeptide is ATP synthase subunit a (Synechococcus sp. (strain CC9902)).